The chain runs to 593 residues: FAD-binding monooxygenase acrE (593 aa).

FAD-binding positions include 61 to 64 (TWRF), 73 to 74 (DS), and Tyr79. 71 to 73 (RVD) lines the NADP(+) pocket. NADP(+) is bound by residues 200–206 (TGASGVQ) and 223–224 (RS).

This sequence belongs to the FAD-binding monooxygenase family. The cofactor is FAD.

The protein operates within secondary metabolite biosynthesis. In terms of biological role, FAD-binding monooxygenase; part of the cluster that mediates the biosynthesis of acurin A, a highly reduced polyketide coupled to a serine via a peptide bond. The activities of the highly reducing polyketide synthase acrA and the nonribosomal peptide synthetase acrB are collectively responsible for the synthesis of the acurin A core structure with a heptaketide backbone produced by acrA covalently fused to a L-serine by acrB. After the formation of the PK-NRP hybrid product, it is detached from acrB by reductive release to set up the formation of the lactam ring by aldol condensation. The hydrolyase acrC then catalyzes water loss to generate a double bond in the ring. This double bond is probably reduced, which is followed by three oxidations at C-22 to generate the carboxylic acid moiety, involving probably the FAD-binding monooxygenase acrE and the cytochrome P450 monooxygenases acrD and acrF. Finally, a last methylation step performed by the O-methyltransferase acrG leads to the production of acurin A. The chain is FAD-binding monooxygenase acrE from Aspergillus aculeatus (strain ATCC 16872 / CBS 172.66 / WB 5094).